The following is a 251-amino-acid chain: Pyrroloquinoline-quinone synthase (251 aa).

It belongs to the PqqC family.

It carries out the reaction 6-(2-amino-2-carboxyethyl)-7,8-dioxo-1,2,3,4,7,8-hexahydroquinoline-2,4-dicarboxylate + 3 O2 = pyrroloquinoline quinone + 2 H2O2 + 2 H2O + H(+). The protein operates within cofactor biosynthesis; pyrroloquinoline quinone biosynthesis. Ring cyclization and eight-electron oxidation of 3a-(2-amino-2-carboxyethyl)-4,5-dioxo-4,5,6,7,8,9-hexahydroquinoline-7,9-dicarboxylic-acid to PQQ. This Klebsiella pneumoniae (strain 342) protein is Pyrroloquinoline-quinone synthase.